Consider the following 89-residue polypeptide: Cytochrome c6 (89 aa).

Cys15, Cys18, His19, and Met61 together coordinate heme c.

Belongs to the cytochrome c family. PetJ subfamily. In terms of assembly, monomer. Post-translationally, binds 1 heme c group covalently per subunit.

It localises to the plastid. The protein localises to the chloroplast thylakoid lumen. In terms of biological role, functions as an electron carrier between membrane-bound cytochrome b6-f and photosystem I in oxygenic photosynthesis. In Tetradesmus obliquus (Green alga), this protein is Cytochrome c6 (petJ).